The primary structure comprises 138 residues: Putative pre-16S rRNA nuclease (138 aa).

It belongs to the YqgF nuclease family.

It is found in the cytoplasm. Its function is as follows. Could be a nuclease involved in processing of the 5'-end of pre-16S rRNA. The sequence is that of Putative pre-16S rRNA nuclease from Flavobacterium johnsoniae (strain ATCC 17061 / DSM 2064 / JCM 8514 / BCRC 14874 / CCUG 350202 / NBRC 14942 / NCIMB 11054 / UW101) (Cytophaga johnsonae).